We begin with the raw amino-acid sequence, 119 residues long: NADH dehydrogenase [ubiquinone] 1 subunit C2 (119 aa).

The chain crosses the membrane as a helical span at residues 56–75 (GLHRQLLYITAFFFAGYYLV).

This sequence belongs to the complex I NDUFC2 subunit family. As to quaternary structure, complex I is composed of 45 different subunits. Interacts with TMEM242.

It localises to the mitochondrion inner membrane. Functionally, accessory subunit of the mitochondrial membrane respiratory chain NADH dehydrogenase (Complex I), that is believed not to be involved in catalysis but required for the complex assembly. Complex I functions in the transfer of electrons from NADH to the respiratory chain. The immediate electron acceptor for the enzyme is believed to be ubiquinone. In Pongo pygmaeus (Bornean orangutan), this protein is NADH dehydrogenase [ubiquinone] 1 subunit C2.